The following is a 1342-amino-acid chain: DNA-directed RNA polymerase subunit beta (1342 aa).

The protein belongs to the RNA polymerase beta chain family. In terms of assembly, the RNAP catalytic core consists of 2 alpha, 1 beta, 1 beta' and 1 omega subunit. When a sigma factor is associated with the core the holoenzyme is formed, which can initiate transcription.

It catalyses the reaction RNA(n) + a ribonucleoside 5'-triphosphate = RNA(n+1) + diphosphate. Its function is as follows. DNA-dependent RNA polymerase catalyzes the transcription of DNA into RNA using the four ribonucleoside triphosphates as substrates. The polypeptide is DNA-directed RNA polymerase subunit beta (Histophilus somni (strain 2336) (Haemophilus somnus)).